The sequence spans 226 residues: MRTLLVDTDLTRAVRGALGDGGFAVDVVGTLEQASSAFFSASYEILLLELVLPDGDGLDWLRQLRSDGYSVPAVIMSRLDDLEKRISVFNSGADDFLRKPVSTDELIARMRALLRRSTQITCPIIEFGNLHFDPIGRQVSVDGHPLMIARRELCILEHLLNRAGRIVPRARLEDQLYSFNDEVSGNALEAGIYRLRGYLSRSGATLRIRTVRGIGYTLELTDASSA.

The region spanning 1-114 (MRTLLVDTDL…ELIARMRALL (114 aa)) is the Response regulatory domain. Residues 122-220 (CPIIEFGNLH…VRGIGYTLEL (99 aa)) constitute a DNA-binding region (ompR/PhoB-type).

Its subcellular location is the cytoplasm. This is Probable transcriptional regulatory protein y4xI from Sinorhizobium fredii (strain NBRC 101917 / NGR234).